A 651-amino-acid polypeptide reads, in one-letter code: Translation factor GUF1 homolog, mitochondrial (651 aa).

The transit peptide at 1 to 26 (MAVTRAAAPMVGNCSSAMLIIGRRYF) directs the protein to the mitochondrion. The tr-type G domain maps to 51 to 228 (KKIRNFGIVA…AVVERLPPPK (178 aa)). GTP contacts are provided by residues 60–67 (AHVDHGKS), 121–125 (DTPGH), and 175–178 (NKVD).

This sequence belongs to the TRAFAC class translation factor GTPase superfamily. Classic translation factor GTPase family. LepA subfamily.

It localises to the mitochondrion inner membrane. It catalyses the reaction GTP + H2O = GDP + phosphate + H(+). Promotes mitochondrial protein synthesis. May act as a fidelity factor of the translation reaction, by catalyzing a one-codon backward translocation of tRNAs on improperly translocated ribosomes. Binds to mitochondrial ribosomes in a GTP-dependent manner. This Brugia malayi (Filarial nematode worm) protein is Translation factor GUF1 homolog, mitochondrial.